The primary structure comprises 489 residues: Ketol-acid reductoisomerase (NADP(+)) (489 aa).

One can recognise a KARI N-terminal Rossmann domain in the interval 17-208 (LGVCEFMEQS…GGHKAGVLRS (192 aa)). Residues 45–48 (CGAQ), Arg-68, Arg-76, Ser-78, and 108–110 (DKQ) contribute to the NADP(+) site. The active site involves His-132. NADP(+) is bound at residue Gly-158. 2 consecutive KARI C-terminal knotted domains span residues 209-344 (SFVA…KTAP) and 345-485 (QEAP…MTAM). Residues Asp-217, Glu-221, Glu-389, and Glu-393 each coordinate Mg(2+). Ser-414 is a binding site for substrate.

The protein belongs to the ketol-acid reductoisomerase family. The cofactor is Mg(2+).

The enzyme catalyses (2R)-2,3-dihydroxy-3-methylbutanoate + NADP(+) = (2S)-2-acetolactate + NADPH + H(+). It catalyses the reaction (2R,3R)-2,3-dihydroxy-3-methylpentanoate + NADP(+) = (S)-2-ethyl-2-hydroxy-3-oxobutanoate + NADPH + H(+). Its pathway is amino-acid biosynthesis; L-isoleucine biosynthesis; L-isoleucine from 2-oxobutanoate: step 2/4. It participates in amino-acid biosynthesis; L-valine biosynthesis; L-valine from pyruvate: step 2/4. In terms of biological role, involved in the biosynthesis of branched-chain amino acids (BCAA). Catalyzes an alkyl-migration followed by a ketol-acid reduction of (S)-2-acetolactate (S2AL) to yield (R)-2,3-dihydroxy-isovalerate. In the isomerase reaction, S2AL is rearranged via a Mg-dependent methyl migration to produce 3-hydroxy-3-methyl-2-ketobutyrate (HMKB). In the reductase reaction, this 2-ketoacid undergoes a metal-dependent reduction by NADPH to yield (R)-2,3-dihydroxy-isovalerate. The sequence is that of Ketol-acid reductoisomerase (NADP(+)) from Flavobacterium johnsoniae (strain ATCC 17061 / DSM 2064 / JCM 8514 / BCRC 14874 / CCUG 350202 / NBRC 14942 / NCIMB 11054 / UW101) (Cytophaga johnsonae).